The chain runs to 328 residues: Protoheme IX farnesyltransferase (328 aa).

The next 8 membrane-spanning stretches (helical) occupy residues 31-51 (IILLLLITTAAGMWLGAKGEV), 53-73 (LFLLFVTLTGGALASGAANAI), 120-140 (VFANLLAALLAMSGIVFYVGV), 153-173 (IVIGGAAGAIPPLVGWAAVTG), 181-201 (LLFAIIVVWTPPHFWALAIYI), 226-246 (IWVYTLILIPMTLLLVYPLHV), 250-270 (IYAVLATYLGVIFIKKAWQLL), and 285-305 (YSIYYMMLLCLVMVIDSLPFT).

Belongs to the UbiA prenyltransferase family. Protoheme IX farnesyltransferase subfamily.

The protein resides in the cell inner membrane. The catalysed reaction is heme b + (2E,6E)-farnesyl diphosphate + H2O = Fe(II)-heme o + diphosphate. It participates in porphyrin-containing compound metabolism; heme O biosynthesis; heme O from protoheme: step 1/1. Functionally, converts heme B (protoheme IX) to heme O by substitution of the vinyl group on carbon 2 of heme B porphyrin ring with a hydroxyethyl farnesyl side group. The polypeptide is Protoheme IX farnesyltransferase (Trichodesmium erythraeum (strain IMS101)).